A 291-amino-acid chain; its full sequence is Gamma-sarcoglycan (291 aa).

At 1–37 (MVREQYTTVTEGTHIERPENQHIYKIGIYGWRKRCLY) the chain is on the cytoplasmic side. A helical; Signal-anchor for type II membrane protein transmembrane segment spans residues 38–58 (LFVLLLLAILVVNLALTIWIL). Topologically, residues 59–291 (KVMWFSPIGM…TCEEHSHVCL (233 aa)) are extracellular. Residue Asn110 is glycosylated (N-linked (GlcNAc...) asparagine). Intrachain disulfides connect Cys265–Cys290 and Cys267–Cys283.

The protein belongs to the sarcoglycan beta/delta/gamma/zeta family. As to quaternary structure, interacts with the syntrophin SNTA1 and FLNC. Cross-link to form 2 major subcomplexes: one consisting of SGCB, SGCD and SGCG and the other consisting of SGCB and SGCD. The association between SGCB and SGCG is particularly strong while SGCA is loosely associated with the other sarcoglycans. Most strongly expressed in skeletal and heart muscle. Also detected in proliferating myoblasts.

It is found in the cell membrane. It localises to the sarcolemma. The protein resides in the cytoplasm. Its subcellular location is the cytoskeleton. Its function is as follows. Component of the sarcoglycan complex, a subcomplex of the dystrophin-glycoprotein complex which forms a link between the F-actin cytoskeleton and the extracellular matrix. In Mus musculus (Mouse), this protein is Gamma-sarcoglycan (Sgcg).